We begin with the raw amino-acid sequence, 415 residues long: Gamma-glutamyl phosphate reductase (415 aa).

This sequence belongs to the gamma-glutamyl phosphate reductase family.

It localises to the cytoplasm. It carries out the reaction L-glutamate 5-semialdehyde + phosphate + NADP(+) = L-glutamyl 5-phosphate + NADPH + H(+). It functions in the pathway amino-acid biosynthesis; L-proline biosynthesis; L-glutamate 5-semialdehyde from L-glutamate: step 2/2. Functionally, catalyzes the NADPH-dependent reduction of L-glutamate 5-phosphate into L-glutamate 5-semialdehyde and phosphate. The product spontaneously undergoes cyclization to form 1-pyrroline-5-carboxylate. This is Gamma-glutamyl phosphate reductase from Mycobacterium sp. (strain JLS).